A 254-amino-acid chain; its full sequence is Coproheme decarboxylase (254 aa).

Fe-coproporphyrin III contacts are provided by residues arginine 136, 150–154 (YPMDK), histidine 177, glutamine 190, and serine 228. The active site involves tyrosine 150.

This sequence belongs to the ChdC family. Type 1 subfamily. Requires Fe-coproporphyrin III as cofactor.

The enzyme catalyses Fe-coproporphyrin III + 2 H2O2 + 2 H(+) = heme b + 2 CO2 + 4 H2O. It carries out the reaction Fe-coproporphyrin III + H2O2 + H(+) = harderoheme III + CO2 + 2 H2O. The catalysed reaction is harderoheme III + H2O2 + H(+) = heme b + CO2 + 2 H2O. It participates in porphyrin-containing compound metabolism; protoheme biosynthesis. Involved in coproporphyrin-dependent heme b biosynthesis. Catalyzes the decarboxylation of Fe-coproporphyrin III (coproheme) to heme b (protoheme IX), the last step of the pathway. The reaction occurs in a stepwise manner with a three-propionate harderoheme intermediate. The protein is Coproheme decarboxylase of Bacillus subtilis (strain 168).